Here is a 162-residue protein sequence, read N- to C-terminus: Ribosome maturation factor RimP (162 aa).

This sequence belongs to the RimP family.

Its subcellular location is the cytoplasm. Its function is as follows. Required for maturation of 30S ribosomal subunits. In Leptospira interrogans serogroup Icterohaemorrhagiae serovar copenhageni (strain Fiocruz L1-130), this protein is Ribosome maturation factor RimP.